The sequence spans 527 residues: MTQQAAEVAKRRTFAIISHPDAGKTTITEKLLLMGKAISVAGTVKSRKSDRHATSDWMEMEKQRGISITTSVMQFPYRDHMINLLDTPGHEDFSEDTYRTLTAVDSALMVLDGGKGVEPRTIALMDVCRLRDTPIVSFINKLDRDIRDPIELLDEIEAVLKIKAAPITWPIGCYRDFKGVYHLADDYIIVYTAGHGHERTETKIIEKLDSDEARAHLGDEYERFVEQLELVQGACHEFNQQEFIDGQLTPVFFGTALGNFGVDHVLDAVVNWAPKPLARVANERTVEPAEEKFSGFVFKIQANMDPKHRDRIAFMRICSGRYDKGMKMRHVRLGKDVRIGDALTFFSSEREQLEEAYAGDIIGLHNHGTIQIGDTFTEGEALGFTGIPHFAPELFRRVRLKDPLKSKQLRQGLQQLAEEGATQVFFPQRSNDIILGAVGVLQFDVVASRLKEEYKVECAYEPITVWSARWIDCDDKKKLEEFENKAVENLAVDGGGHLTYLAPTRVNLALMEERWPDVKFRATREHH.

The region spanning 9 to 277 is the tr-type G domain; the sequence is AKRRTFAIIS…AVVNWAPKPL (269 aa). Residues 18–25, 86–90, and 140–143 contribute to the GTP site; these read SHPDAGKT, DTPGH, and NKLD.

The protein belongs to the TRAFAC class translation factor GTPase superfamily. Classic translation factor GTPase family. PrfC subfamily.

Its subcellular location is the cytoplasm. Functionally, increases the formation of ribosomal termination complexes and stimulates activities of RF-1 and RF-2. It binds guanine nucleotides and has strong preference for UGA stop codons. It may interact directly with the ribosome. The stimulation of RF-1 and RF-2 is significantly reduced by GTP and GDP, but not by GMP. This chain is Peptide chain release factor 3, found in Pseudomonas syringae pv. syringae (strain B728a).